The following is a 185-amino-acid chain: MIVLGIDPGSRRCGYGVVAREGARLTVVESGVLVPGDLPMAQRLGRILEGLDALIARARPVEASVESVFSGASPRSALVLGQARGVALAAAARAGLPVFEYAPSEVKLAFTGNGRAGKDQMLRTARMLLGAAPDLSDEADALAIAVCHLARRAFAVPAAGAGRAAAARAAAARLRPSRRDHRGTP.

Active-site residues include Asp-7, Glu-66, and Asp-137. Residues Asp-7, Glu-66, and Asp-137 each coordinate Mg(2+).

The protein belongs to the RuvC family. Homodimer which binds Holliday junction (HJ) DNA. The HJ becomes 2-fold symmetrical on binding to RuvC with unstacked arms; it has a different conformation from HJ DNA in complex with RuvA. In the full resolvosome a probable DNA-RuvA(4)-RuvB(12)-RuvC(2) complex forms which resolves the HJ. Requires Mg(2+) as cofactor.

The protein localises to the cytoplasm. It carries out the reaction Endonucleolytic cleavage at a junction such as a reciprocal single-stranded crossover between two homologous DNA duplexes (Holliday junction).. In terms of biological role, the RuvA-RuvB-RuvC complex processes Holliday junction (HJ) DNA during genetic recombination and DNA repair. Endonuclease that resolves HJ intermediates. Cleaves cruciform DNA by making single-stranded nicks across the HJ at symmetrical positions within the homologous arms, yielding a 5'-phosphate and a 3'-hydroxyl group; requires a central core of homology in the junction. The consensus cleavage sequence is 5'-(A/T)TT(C/G)-3'. Cleavage occurs on the 3'-side of the TT dinucleotide at the point of strand exchange. HJ branch migration catalyzed by RuvA-RuvB allows RuvC to scan DNA until it finds its consensus sequence, where it cleaves and resolves the cruciform DNA. This is Crossover junction endodeoxyribonuclease RuvC from Anaeromyxobacter sp. (strain K).